A 521-amino-acid polypeptide reads, in one-letter code: Two-component response regulator ARR11 (521 aa).

Residues 12 to 127 (RVLVVDDDPT…ELKIIWQHVL (116 aa)) form the Response regulatory domain. A 4-aspartylphosphate modification is found at Asp63. The short motif at 192-195 (KKAR) is the Nuclear localization signal element. Positions 195-246 (RVVWSFELHHKFVNAVNQIGCDHKAGPKKILDLMNVPWLTRENVASHLQKYR) form a DNA-binding region, myb-like GARP.

Belongs to the ARR family. Type-B subfamily. In terms of assembly, binds the target DNA as a monomer. In terms of processing, two-component system major event consists of a His-to-Asp phosphorelay between a sensor histidine kinase (HK) and a response regulator (RR). In plants, the His-to-Asp phosphorelay involves an additional intermediate named Histidine-containing phosphotransfer protein (HPt). This multistep phosphorelay consists of a His-Asp-His-Asp sequential transfer of a phosphate group between first a His and an Asp of the HK protein, followed by the transfer to a conserved His of the HPt protein and finally the transfer to an Asp in the receiver domain of the RR protein. In terms of tissue distribution, detected in the whole plant. Predominantly expressed in roots and stems.

The protein resides in the nucleus. Its function is as follows. Transcriptional activator that binds specifically to the DNA sequence 5'-[AG]GATT-3'. Functions as a response regulator involved in His-to-Asp phosphorelay signal transduction system. Phosphorylation of the Asp residue in the receiver domain activates the ability of the protein to promote the transcription of target genes. Could directly activate some type-A response regulators in response to cytokinins. The protein is Two-component response regulator ARR11 (ARR11) of Arabidopsis thaliana (Mouse-ear cress).